Reading from the N-terminus, the 159-residue chain is Ribosomal RNA large subunit methyltransferase H (159 aa).

S-adenosyl-L-methionine-binding positions include L76, G108, and 127–132 (FSPMTF).

The protein belongs to the RNA methyltransferase RlmH family. As to quaternary structure, homodimer.

The protein localises to the cytoplasm. It catalyses the reaction pseudouridine(1915) in 23S rRNA + S-adenosyl-L-methionine = N(3)-methylpseudouridine(1915) in 23S rRNA + S-adenosyl-L-homocysteine + H(+). Functionally, specifically methylates the pseudouridine at position 1915 (m3Psi1915) in 23S rRNA. In Alkaliphilus oremlandii (strain OhILAs) (Clostridium oremlandii (strain OhILAs)), this protein is Ribosomal RNA large subunit methyltransferase H.